The sequence spans 707 residues: UvrABC system protein C (707 aa).

The 81-residue stretch at 14–94 (AEPGCYLMKD…IKKHRPRFNV (81 aa)) folds into the GIY-YIG domain. In terms of domain architecture, UVR spans 206–241 (GELVERLRGRMAGAAEGLRFEEAARLRDQLQAVERS). The interval 655–707 (DAPPIAADEPSGAPAGAPGGGPAEASPEAVAAATEAEIDAALADEDASPEPAA) is disordered. Low complexity-rich tracts occupy residues 660 to 670 (AADEPSGAPAG) and 677 to 689 (AEAS…AATE). A compositionally biased stretch (acidic residues) spans 690–707 (AEIDAALADEDASPEPAA).

It belongs to the UvrC family. Interacts with UvrB in an incision complex.

The protein resides in the cytoplasm. The UvrABC repair system catalyzes the recognition and processing of DNA lesions. UvrC both incises the 5' and 3' sides of the lesion. The N-terminal half is responsible for the 3' incision and the C-terminal half is responsible for the 5' incision. This is UvrABC system protein C from Anaeromyxobacter dehalogenans (strain 2CP-1 / ATCC BAA-258).